The chain runs to 212 residues: Redox-sensing transcriptional repressor Rex (212 aa).

The H-T-H motif DNA-binding region spans 17-56 (LYARSLRYLLEEGVHSVSSQELGERINVTAAQIRKDLSYF). NAD(+) is bound at residue 91-96 (GIGLLG).

The protein belongs to the transcriptional regulatory Rex family. Homodimer.

The protein resides in the cytoplasm. In terms of biological role, modulates transcription in response to changes in cellular NADH/NAD(+) redox state. The sequence is that of Redox-sensing transcriptional repressor Rex from Chloroflexus aurantiacus (strain ATCC 29366 / DSM 635 / J-10-fl).